We begin with the raw amino-acid sequence, 106 residues long: Nucleoid-associated protein Smal_0858 (106 aa).

The segment at 81-106 (IDAESKSKMGSATAGMQLPPGMKLPF) is disordered.

The protein belongs to the YbaB/EbfC family. In terms of assembly, homodimer.

The protein localises to the cytoplasm. Its subcellular location is the nucleoid. Binds to DNA and alters its conformation. May be involved in regulation of gene expression, nucleoid organization and DNA protection. This chain is Nucleoid-associated protein Smal_0858, found in Stenotrophomonas maltophilia (strain R551-3).